Reading from the N-terminus, the 432-residue chain is Trigger factor (432 aa).

A PPIase FKBP-type domain is found at 161–246 (DDRVTIDFVG…LKKVENMVLP (86 aa)).

Belongs to the FKBP-type PPIase family. Tig subfamily.

It is found in the cytoplasm. It catalyses the reaction [protein]-peptidylproline (omega=180) = [protein]-peptidylproline (omega=0). In terms of biological role, involved in protein export. Acts as a chaperone by maintaining the newly synthesized protein in an open conformation. Functions as a peptidyl-prolyl cis-trans isomerase. The polypeptide is Trigger factor (Haemophilus influenzae (strain PittGG)).